Consider the following 74-residue polypeptide: Exodeoxyribonuclease 7 small subunit (74 aa).

This sequence belongs to the XseB family. Heterooligomer composed of large and small subunits.

The protein localises to the cytoplasm. The enzyme catalyses Exonucleolytic cleavage in either 5'- to 3'- or 3'- to 5'-direction to yield nucleoside 5'-phosphates.. Bidirectionally degrades single-stranded DNA into large acid-insoluble oligonucleotides, which are then degraded further into small acid-soluble oligonucleotides. This is Exodeoxyribonuclease 7 small subunit from Ruthia magnifica subsp. Calyptogena magnifica.